The primary structure comprises 504 residues: Cytochrome P450 71B7 (504 aa).

A helical membrane pass occupies residues 1-21 (MSILLCFLCLLPVFLVSLSIL). Lys82 is covalently cross-linked (Glycyl lysine isopeptide (Lys-Gly) (interchain with G-Cter in ubiquitin)). Residue Cys446 participates in heme binding.

Belongs to the cytochrome P450 family. Heme serves as cofactor. As to expression, highly expressed in rosette leaves. Also expressed in roots, leaves, flowers, and siliques.

The protein localises to the membrane. This Arabidopsis thaliana (Mouse-ear cress) protein is Cytochrome P450 71B7 (CYP71B7).